The primary structure comprises 69 residues: Protein transport protein Sec61 subunit gamma (69 aa).

The Cytoplasmic segment spans residues 1–40; the sequence is MDILEETAAPLKDFAKNSIRLFKKCTKPDAQEFQKIALAT. The helical transmembrane segment at 41 to 61 threads the bilayer; that stretch reads LIGFAIMGFIGFFVKLIHIPI. At 62–69 the chain is on the extracellular side; that stretch reads NNILVGGV.

The protein belongs to the SecE/SEC61-gamma family. Heterotrimeric complex composed of SEC61-alpha, SEC61-beta and SEC61-gamma.

It localises to the endoplasmic reticulum membrane. Functionally, necessary for protein translocation in the endoplasmic reticulum. In Dictyostelium discoideum (Social amoeba), this protein is Protein transport protein Sec61 subunit gamma (sec61g).